Here is a 67-residue protein sequence, read N- to C-terminus: Conotoxin Cl6.10 (67 aa).

An N-terminal signal peptide occupies residues 1–24; sequence MKLTCVLIAAVLLLAVCQLDSADA. The propeptide occupies 25–37; the sequence is TAYMRKDPSLRSP. 3 disulfides stabilise this stretch: Cys43-Cys57, Cys50-Cys61, and Cys56-Cys65.

This sequence belongs to the conotoxin O1 superfamily. Expressed by the venom duct.

It localises to the secreted. The chain is Conotoxin Cl6.10 from Californiconus californicus (California cone).